Reading from the N-terminus, the 434-residue chain is Putative D-alanyl-D-alanine carboxypeptidase (434 aa).

Residues 7–25 (YLSLLAVSCSVSAAKYPVL) traverse the membrane as a helical; Signal-anchor segment.

The protein belongs to the peptidase S12 family. YfeW subfamily.

It is found in the cell inner membrane. The enzyme catalyses Preferential cleavage: (Ac)2-L-Lys-D-Ala-|-D-Ala. Also transpeptidation of peptidyl-alanyl moieties that are N-acyl substituents of D-alanine.. This is Putative D-alanyl-D-alanine carboxypeptidase from Escherichia coli O157:H7.